The sequence spans 243 residues: MKHDLETLKHIIDSSNRITFFTGAGVSVASGVPDFRSMGGLFDEISKDGLSPEYLLSRDYLEDDPEGFINFCHKRLLFVDTMPNIVHDWIAKLERNQQSLGVITQNIDGLHSDAGSQHVDELHGTLNRFYCNACHKSYMKSDVIDRTLKHCDNCGGAIRPDIVLYGEMLDQPTIIRALNKIEDADTLVVLGSSLVVQPAAGLISNFKGDNLIIINKDRTPYDNDATLVIHDDMVSVVKSLMTE.

The 243-residue stretch at 1–243 folds into the Deacetylase sirtuin-type domain; that stretch reads MKHDLETLKH…VSVVKSLMTE (243 aa). Alanine 24, phenylalanine 35, arginine 36, glutamine 105, isoleucine 107, aspartate 108, and histidine 123 together coordinate NAD(+). Phenylalanine 35 contacts nicotinamide. The nicotinamide site is built by isoleucine 107 and aspartate 108. Histidine 123 (proton acceptor) is an active-site residue. Zn(2+) is bound by residues cysteine 131, cysteine 134, cysteine 151, and cysteine 154. The NAD(+) site is built by serine 192, serine 193, asparagine 215, and aspartate 232.

It belongs to the sirtuin family. Class U subfamily. Requires Zn(2+) as cofactor.

The protein localises to the cytoplasm. The enzyme catalyses N(6)-acetyl-L-lysyl-[protein] + NAD(+) + H2O = 2''-O-acetyl-ADP-D-ribose + nicotinamide + L-lysyl-[protein]. NAD-dependent protein deacetylase which modulates the activities of several enzymes which are inactive in their acetylated form. This is NAD-dependent protein deacetylase from Staphylococcus aureus (strain MRSA252).